A 397-amino-acid chain; its full sequence is Protein RecA (397 aa).

The segment at 1–23 (MALETKPAKDPAAEDKHELDPKR) is disordered. 83–90 (GPESSGKT) contacts ATP.

This sequence belongs to the RecA family.

It localises to the cytoplasm. Functionally, can catalyze the hydrolysis of ATP in the presence of single-stranded DNA, the ATP-dependent uptake of single-stranded DNA by duplex DNA, and the ATP-dependent hybridization of homologous single-stranded DNAs. It interacts with LexA causing its activation and leading to its autocatalytic cleavage. This chain is Protein RecA, found in Bifidobacterium longum (strain NCC 2705).